The sequence spans 201 residues: Small ribosomal subunit protein uS4c (201 aa).

Residues 89 to 150 (MRLDNILFRL…KQRSKVLIQN (62 aa)) enclose the S4 RNA-binding domain.

It belongs to the universal ribosomal protein uS4 family. As to quaternary structure, part of the 30S ribosomal subunit. Contacts protein S5. The interaction surface between S4 and S5 is involved in control of translational fidelity.

The protein resides in the plastid. Its subcellular location is the chloroplast. One of the primary rRNA binding proteins, it binds directly to 16S rRNA where it nucleates assembly of the body of the 30S subunit. Its function is as follows. With S5 and S12 plays an important role in translational accuracy. This chain is Small ribosomal subunit protein uS4c (rps4), found in Dioscorea elephantipes (Elephant's foot yam).